Here is a 164-residue protein sequence, read N- to C-terminus: Transmembrane protein 234 (164 aa).

A run of 3 helical transmembrane segments spans residues 1–21, 82–102, and 112–132; these read MAASLGQVLALVLVAALWGGT, LAVPICNSLAIIFTLIVGKAL, and VAGMVLTVIGISLCITSSVPW.

Belongs to the TMEM234 family.

Its subcellular location is the membrane. The sequence is that of Transmembrane protein 234 (TMEM234) from Homo sapiens (Human).